The sequence spans 376 residues: Glutamate 5-kinase (376 aa).

Lys-18 is a binding site for ATP. Positions 58, 145, and 157 each coordinate substrate. ATP contacts are provided by residues 177 to 178 (SD) and 218 to 224 (TGGMASK). Positions 280-358 (TGALTLDAGA…SELPGELRRP (79 aa)) constitute a PUA domain.

It belongs to the glutamate 5-kinase family.

The protein localises to the cytoplasm. It catalyses the reaction L-glutamate + ATP = L-glutamyl 5-phosphate + ADP. Its pathway is amino-acid biosynthesis; L-proline biosynthesis; L-glutamate 5-semialdehyde from L-glutamate: step 1/2. Its function is as follows. Catalyzes the transfer of a phosphate group to glutamate to form L-glutamate 5-phosphate. The protein is Glutamate 5-kinase of Mycobacterium tuberculosis (strain ATCC 25177 / H37Ra).